Consider the following 1488-residue polypeptide: Chromosome partition protein MukB (1488 aa).

Position 34 to 41 (34 to 41) interacts with ATP; it reads GGNGAGKS. Coiled-coil stretches lie at residues 326-418, 444-472, and 509-602; these read LEAD…QYNQ, LDTF…QTAH, and RHLA…QRAP. A flexible hinge region spans residues 666 to 783; sequence PGGAEDQRLN…SLPIFGRAAR (118 aa). Coiled-coil stretches lie at residues 835 to 923, 977 to 1116, and 1209 to 1265; these read EAEI…AKLE, EMLS…AKAG, and VEAI…LQSV.

Belongs to the SMC family. MukB subfamily. As to quaternary structure, homodimerization via its hinge domain. Binds to DNA via its C-terminal region. Interacts, and probably forms a ternary complex, with MukE and MukF via its C-terminal region. The complex formation is stimulated by calcium or magnesium. Interacts with tubulin-related protein FtsZ.

It is found in the cytoplasm. The protein localises to the nucleoid. Plays a central role in chromosome condensation, segregation and cell cycle progression. Functions as a homodimer, which is essential for chromosome partition. Involved in negative DNA supercoiling in vivo, and by this means organize and compact chromosomes. May achieve or facilitate chromosome segregation by condensation DNA from both sides of a centrally located replisome during cell division. The chain is Chromosome partition protein MukB from Salmonella paratyphi B (strain ATCC BAA-1250 / SPB7).